Reading from the N-terminus, the 278-residue chain is Poly(3-hydroxyoctanoate) depolymerase (278 aa).

The first 33 residues, 1–33 (MPLRTLLCGLLLAVCLGQHALAASRCSERPRTL), serve as a signal peptide directing secretion.

It localises to the secreted. It carries out the reaction Hydrolyzes the polyester poly{oxycarbonyl[(R)-2-pentylethylene]} to oligomers.. Functionally, hydrolysis of poly(3-hydroxyoctanoic acid). In Pseudomonas fluorescens, this protein is Poly(3-hydroxyoctanoate) depolymerase (phaZ).